A 335-amino-acid polypeptide reads, in one-letter code: Methionine import ATP-binding protein MetN 2 (335 aa).

An ABC transporter domain is found at Ile-2–Val-242. Gly-38 to Ser-45 contacts ATP.

The protein belongs to the ABC transporter superfamily. Methionine importer (TC 3.A.1.24) family. In terms of assembly, the complex is composed of two ATP-binding proteins (MetN), two transmembrane proteins (MetI) and a solute-binding protein (MetQ).

It localises to the cell inner membrane. It catalyses the reaction L-methionine(out) + ATP + H2O = L-methionine(in) + ADP + phosphate + H(+). The catalysed reaction is D-methionine(out) + ATP + H2O = D-methionine(in) + ADP + phosphate + H(+). Functionally, part of the ABC transporter complex MetNIQ involved in methionine import. Responsible for energy coupling to the transport system. This is Methionine import ATP-binding protein MetN 2 from Pseudomonas aeruginosa (strain UCBPP-PA14).